Consider the following 145-residue polypeptide: Small ribosomal subunit protein uS12A (145 aa).

The residue at position 64 (proline 64) is a Hydroxyproline.

Belongs to the universal ribosomal protein uS12 family.

The sequence is that of Small ribosomal subunit protein uS12A (RPS23A) from Naumovozyma castellii (Yeast).